Here is a 750-residue protein sequence, read N- to C-terminus: MAKPRLLVLYFALIVVPAWVSSIVLTGTSEPPDAQTVAPAEDETLQNEADNQENVLSQLLGDYDKVKAMSEGSDCQCKCVVRPLGRDACQRINAGASRKEDFYTVETITSGSSCKCACVAPPSALNPCEGDFRLQKLREADSQDLKLSTIIDMLEGAFYGLDLLKLHSVTTKLVGRVDKLEEEVSKNLTKENEQIKEDMEEIRTEMNKRGKENCSENILDSMPDIRSALQRDAAAAYAHPEYEERFLQEETVSQQINSIELLQTRPLALPEVVKSQRPLQRQVHLRGRPASQPTVIRGITYYKAKVSEEENDIEEQQDEFFSGDNGVDLLIEDQLLRHNGLMTSVTRRPAATRQGHSTAVTSDLNARTAPWSSALPQPSTSDPSIANHASVGPTLQTTSVSPDPTRESVLQPSPQVPATTVAHTATQQPAAPAPPAVSPREALMEAMHTVPVPPTTVRTDSLGKDAPAGWGTTPASPTLSPEEEDDIRNVIGRCKDTLSTITGPTTQNTYGRNEGAWMKDPLAKDERIYVTNYYYGNTLVEFRNLENFKQGRWSNSYKLPYSWIGTGHVVYNGAFYYNRAFTRNIIKYDLKQRYVAAWAMLHDVAYEEATPWRWQGHSDVDFAVDENGLWLIYPALDDEGFSQEVIVLSKLNAADLSTQKETTWRTGLRRNFYGNCFVICGVLYAVDSYNQRNANISYAFDTHTNTQIVPRLLFENEYSYTTQIDYNPKDRLLYAWDNGHQVTYHVIFAY.

The N-terminal stretch at 1-22 (MAKPRLLVLYFALIVVPAWVSS) is a signal peptide. Coiled-coil stretches lie at residues 40–68 (AEDE…KVKA) and 179–213 (KLEE…GKEN). N187 and N213 each carry an N-linked (GlcNAc...) asparagine glycan. Disordered stretches follow at residues 346-437 (TRRP…PPAV) and 452-484 (VPPT…PEEE). Polar residues-rich tracts occupy residues 354–384 (QGHS…SDPS) and 393–413 (PTLQ…LQPS). The segment covering 416–430 (VPATTVAHTATQQPA) has biased composition (low complexity). The 258-residue stretch at 493–750 (RCKDTLSTIT…QVTYHVIFAY (258 aa)) folds into the Olfactomedin-like domain. Cysteines 494 and 680 form a disulfide. N-linked (GlcNAc...) asparagine glycosylation occurs at N695.

As to quaternary structure, homodimer. Binds to heparin and chondroitin sulfate E. Post-translationally, O-glycosylated and N-glycosylated.

It is found in the secreted. This chain is Olfactomedin-like protein 2B (OLFML2B), found in Homo sapiens (Human).